The chain runs to 218 residues: Recombination protein RecR (218 aa).

The C4-type zinc-finger motif lies at 56–71 (CRICCNISREEVCRIC). The 117-residue stretch at 79-195 (GTICVVEEPK…VVSRLASGMP (117 aa)) folds into the Toprim domain.

This sequence belongs to the RecR family.

May play a role in DNA repair. It seems to be involved in an RecBC-independent recombinational process of DNA repair. It may act with RecF and RecO. The sequence is that of Recombination protein RecR from Corynebacterium glutamicum (strain R).